Reading from the N-terminus, the 318-residue chain is Taste receptor type 2 member 60 (318 aa).

Residues 1–7 (MNGDHMV) lie on the Extracellular side of the membrane. A helical transmembrane segment spans residues 8–28 (LGSSMTDEKAIILVIILLLLC). At 29–40 (LVAIAGNCFITA) the chain is on the cytoplasmic side. The chain crosses the membrane as a helical span at residues 41–61 (ALGMEWVLQRMLLPCDKLLVS). The Extracellular portion of the chain corresponds to 62–88 (LGASRFCPQWVVMGKTTYVFLYPTAFP). The chain crosses the membrane as a helical span at residues 89-109 (YNPVLRFLAFQWDLLNAATLW). At 110-128 (FSTWLSVFYCVKIATFTHP) the chain is on the cytoplasmic side. Residues 129 to 149 (VFLWLKHKLSEWVPWMLFSSV) form a helical membrane-spanning segment. Residues 150-183 (GLSSFTTILFFIGNHRVYQSYLRNHLQPWNVTGN) lie on the Extracellular side of the membrane. N179 is a glycosylation site (N-linked (GlcNAc...) asparagine). The helical transmembrane segment at 184–204 (SIWSYCEKFYLFPLKMITWTM) threads the bilayer. Topologically, residues 205 to 234 (PTAVFFICMILLITSLGRHMKKALLTNSGF) are cytoplasmic. Residues 235 to 255 (RDPSVQAHIKAMLALLSFAML) form a helical membrane-spanning segment. At 256–264 (FISYFLSLV) the chain is on the extracellular side. The helical transmembrane segment at 265–285 (FSAAGIFPPLDFKFWVWESVI) threads the bilayer. The Cytoplasmic portion of the chain corresponds to 286-318 (YLCAAVHPIILLFSNRRLRAVLKRCRSSRCGTP).

It belongs to the G-protein coupled receptor T2R family.

Its subcellular location is the membrane. Its function is as follows. Receptor that may play a role in the perception of bitterness and is gustducin-linked. May play a role in sensing the chemical composition of the gastrointestinal content. The activity of this receptor may stimulate alpha gustducin, mediate PLC-beta-2 activation and lead to the gating of TRPM5. In Pongo pygmaeus (Bornean orangutan), this protein is Taste receptor type 2 member 60 (TAS2R60).